The primary structure comprises 521 residues: MLNVPSQSFPAPRSQQRVASGGRSKVPLKQGRSLMDWIRLTKSGKDLTGLKGRLIEVTEEELKKHNKKDDCWICIRGFVYNVSPYMEYHPGGEDELMRAAGSDGTELFDQVHRWVNYESMLKECLVGRMAIKPAVLKDYREEEKKVLNGMLPKSQVTDTLAKEGPSYPSYDWFQTDSLVTIAIYTKQKDINLDSIIVDHQNDSFRAETIIKDCLYLIHIGLSHEVQEDFSVRVVESVGKIEIVLQKKENTSWDFLGHPLKNHNSLIPRKDTGLYYRKCQLISKEDVTHDTRLFCLMLPPSTHLQVPIGQHVYLKLPITGTEIVKPYTPVSGSLLSEFKEPVLPNNKYIYFLIKIYPTGLFTPELDRLQIGDFVSVSSPEGNFKISKFQELEDLFLLAAGTGFTPMVKILNYALTDIPSLRKVKLMFFNKTEDDIIWRSQLEKLAFKDKRLDVEFVLSAPISEWNGKQGHISPALLSEFLKRNLDKSKVLVCICGPVPFTEQGVRLLHDLNFSKNEIHSFTA.

N-acetylmethionine is present on methionine 1. Residues 1–18 (MLNVPSQSFPAPRSQQRV) are compositionally biased toward polar residues. The tract at residues 1-27 (MLNVPSQSFPAPRSQQRVASGGRSKVP) is disordered. A Cytochrome b5 heme-binding domain is found at 54 to 130 (LIEVTEEELK…LKECLVGRMA (77 aa)). Residues histidine 89 and histidine 112 each contribute to the heme site. In terms of domain architecture, CS spans 165–256 (PSYPSYDWFQ…KENTSWDFLG (92 aa)). Residues 273–385 (LYYRKCQLIS…SSPEGNFKIS (113 aa)) form the FAD-binding FR-type domain. FAD is bound by residues 365–380 (DRLQ…SPEG) and 392–424 (DLFL…KVKL).

The protein belongs to the flavoprotein pyridine nucleotide cytochrome reductase family. It depends on FAD as a cofactor. As to expression, widely expressed.

The protein localises to the endoplasmic reticulum. It catalyses the reaction 2 Fe(III)-[cytochrome b5] + NADH = 2 Fe(II)-[cytochrome b5] + NAD(+) + H(+). NADH-cytochrome b5 reductase involved in endoplasmic reticulum stress response pathway. Plays a critical role in protecting pancreatic beta-cells against oxidant stress, possibly by protecting the cell from excess buildup of reactive oxygen species (ROS). Reduces a variety of substrates in vitro, such as cytochrome c, feericyanide and methemoglobin. This is Cytochrome b5 reductase 4 from Homo sapiens (Human).